Here is a 107-residue protein sequence, read N- to C-terminus: Thioredoxin (107 aa).

The region spanning S2–S107 is the Thioredoxin domain. Catalysis depends on nucleophile residues C31 and C34. Cysteines 31 and 34 form a disulfide.

The protein belongs to the thioredoxin family.

It is found in the plastid. The protein resides in the chloroplast. Functionally, participates in various redox reactions through the reversible oxidation of its active center dithiol to a disulfide and catalyzes dithiol-disulfide exchange reactions. This chain is Thioredoxin (trxA), found in Pyropia yezoensis (Susabi-nori).